Consider the following 62-residue polypeptide: Small ribosomal subunit protein uS14 (62 aa).

Zn(2+) is bound by residues cysteine 25, cysteine 28, cysteine 41, and cysteine 44.

The protein belongs to the universal ribosomal protein uS14 family. Zinc-binding uS14 subfamily. As to quaternary structure, part of the 30S ribosomal subunit. Contacts proteins S3 and S10. Requires Zn(2+) as cofactor.

Functionally, binds 16S rRNA, required for the assembly of 30S particles and may also be responsible for determining the conformation of the 16S rRNA at the A site. This chain is Small ribosomal subunit protein uS14, found in Persephonella marina (strain DSM 14350 / EX-H1).